Reading from the N-terminus, the 147-residue chain is MSFNANLDTLYRQVIMDHYKNPRNKGVLNDSIVVDMNNPTCGDRIRLTMKLDGDIVEDAKFEGEGCSISMASASMMTQAIKGKDIETALSMSKIFSDMMQGKEYDDSIDLGDIEALQGVSKFPARIKCATLSWKALEKGVAKEEGGN.

Residues Cys-41, Asp-43, Cys-66, and Cys-128 each coordinate Zn(2+).

Belongs to the NifU family. In terms of assembly, interacts with SufS; this interaction enhances SufS cysteine desulfurase activity. Interacts with frataxin/Fra. It depends on Zn(2+) as a cofactor.

In terms of biological role, part of the SUF-like system that mediates the biosynthesis of iron-sulfur (Fe-S) clusters. Acts as a sulfurtransferase and thus transfers sulfur from SufS to SufB. Mechanistically, the transfer from SufS to SufU is triggered by zinc-ligand swapping that provides a free thiol from SufU to accept sulfur from SufS. The protein is Zinc-dependent sulfurtransferase SufU (sufU) of Bacillus subtilis (strain 168).